The sequence spans 478 residues: Glutamate--tRNA ligase (478 aa).

The 'HIGH' region motif lies at 9–19 (PSPTGLLHIGT). A 'KMSKS' region motif is present at residues 248–252 (KLSKR). Position 251 (Lys251) interacts with ATP.

It belongs to the class-I aminoacyl-tRNA synthetase family. Glutamate--tRNA ligase type 1 subfamily. In terms of assembly, monomer.

Its subcellular location is the cytoplasm. It catalyses the reaction tRNA(Glu) + L-glutamate + ATP = L-glutamyl-tRNA(Glu) + AMP + diphosphate. Its function is as follows. Catalyzes the attachment of glutamate to tRNA(Glu) in a two-step reaction: glutamate is first activated by ATP to form Glu-AMP and then transferred to the acceptor end of tRNA(Glu). In Prochlorococcus marinus subsp. pastoris (strain CCMP1986 / NIES-2087 / MED4), this protein is Glutamate--tRNA ligase.